Reading from the N-terminus, the 340-residue chain is Methionine import ATP-binding protein MetN 2 (340 aa).

The ABC transporter domain maps to 2 to 241 (ITLQNVVKEY…PKEKVTQRFV (240 aa)). Residue 38-45 (GYSGAGKS) participates in ATP binding.

The protein belongs to the ABC transporter superfamily. Methionine importer (TC 3.A.1.24) family. In terms of assembly, the complex is composed of two ATP-binding proteins (MetN), two transmembrane proteins (MetI) and a solute-binding protein (MetQ).

It localises to the cell membrane. It catalyses the reaction L-methionine(out) + ATP + H2O = L-methionine(in) + ADP + phosphate + H(+). It carries out the reaction D-methionine(out) + ATP + H2O = D-methionine(in) + ADP + phosphate + H(+). In terms of biological role, part of the ABC transporter complex MetNIQ involved in methionine import. Responsible for energy coupling to the transport system. This chain is Methionine import ATP-binding protein MetN 2, found in Listeria innocua serovar 6a (strain ATCC BAA-680 / CLIP 11262).